A 269-amino-acid polypeptide reads, in one-letter code: Carbohydrate metabolism regulator TYE7 (269 aa).

The segment at 146 to 178 (QPKIKQEPGTKAATKPKRRAPRKKLTESQKKAH) is disordered. Residues 159–168 (TKPKRRAPRK) are compositionally biased toward basic residues. The segment covering 169–178 (KLTESQKKAH) has biased composition (basic and acidic residues). One can recognise a bHLH domain in the interval 173–244 (SQKKAHNKIE…EKATEYILHL (72 aa)).

Efficient DNA binding requires dimerization with another bHLH protein.

Its subcellular location is the nucleus. Its function is as follows. Key transcriptional regulator of carbohydrate metabolism. Binds the promoter sequences of the glycolytic genes at the CANNTG motif and activates their expression during growth on either fermentable or non-fermentable carbon sources as well as under hypoxic growth conditions. Complete glycolytic activation by GAL4 and TYE7 is required for full virulence. Involved in biofilm formation and negatively regulates hyphal formation under hypoxia. Also controls the expression of the copper transport protein CTR1. In Candida albicans (strain SC5314 / ATCC MYA-2876) (Yeast), this protein is Carbohydrate metabolism regulator TYE7 (TYE7).